Consider the following 743-residue polypeptide: 1,4-alpha-glucan branching enzyme GlgB (743 aa).

Asp423 acts as the Nucleophile in catalysis. Glu476 (proton donor) is an active-site residue.

The protein belongs to the glycosyl hydrolase 13 family. GlgB subfamily. As to quaternary structure, monomer.

It carries out the reaction Transfers a segment of a (1-&gt;4)-alpha-D-glucan chain to a primary hydroxy group in a similar glucan chain.. It functions in the pathway glycan biosynthesis; glycogen biosynthesis. Catalyzes the formation of the alpha-1,6-glucosidic linkages in glycogen by scission of a 1,4-alpha-linked oligosaccharide from growing alpha-1,4-glucan chains and the subsequent attachment of the oligosaccharide to the alpha-1,6 position. The sequence is that of 1,4-alpha-glucan branching enzyme GlgB from Pseudomonas fluorescens (strain ATCC BAA-477 / NRRL B-23932 / Pf-5).